Consider the following 337-residue polypeptide: Inositol 2-dehydrogenase (337 aa).

It belongs to the Gfo/Idh/MocA family. As to quaternary structure, homotetramer.

The catalysed reaction is myo-inositol + NAD(+) = scyllo-inosose + NADH + H(+). Involved in the oxidation of myo-inositol (MI) to 2-keto-myo-inositol (2KMI or 2-inosose). In Burkholderia ambifaria (strain MC40-6), this protein is Inositol 2-dehydrogenase.